Here is a 438-residue protein sequence, read N- to C-terminus: Putative pectate lyase 14 (438 aa).

The first 26 residues, 1–26 (MVVARTLFSISATLIIFLALFLHVNA), serve as a signal peptide directing secretion. N-linked (GlcNAc...) asparagine glycosylation is found at N40, N46, and N73. Residues D236, D260, and D264 each contribute to the Ca(2+) site. R316 is an active-site residue.

It belongs to the polysaccharide lyase 1 family. It depends on Ca(2+) as a cofactor.

It carries out the reaction Eliminative cleavage of (1-&gt;4)-alpha-D-galacturonan to give oligosaccharides with 4-deoxy-alpha-D-galact-4-enuronosyl groups at their non-reducing ends.. It participates in glycan metabolism; pectin degradation; 2-dehydro-3-deoxy-D-gluconate from pectin: step 2/5. This chain is Putative pectate lyase 14, found in Arabidopsis thaliana (Mouse-ear cress).